Here is a 417-residue protein sequence, read N- to C-terminus: Lactose permease (417 aa).

Met-1 is subject to N-formylmethionine; partial. Residues 1–7 are Cytoplasmic-facing; it reads MYYLKNT. Residues 8 to 34 form a helical membrane-spanning segment; sequence NFWMFGLFFFFYFFIMGAYFPFFPIWL. The Periplasmic segment spans residues 35 to 41; that stretch reads HDINHIS. A helical membrane pass occupies residues 42–70; it reads KSDTGIIFAAISLFSLLFQPLFGLLSDKL. At 71-74 the chain is on the cytoplasmic side; the sequence is GLRK. A helical membrane pass occupies residues 75–100; it reads YLLWIITGMLVMFAPFFIFIFGPLLQ. Topologically, residues 101-104 are periplasmic; sequence YNIL. A helical transmembrane segment spans residues 105 to 129; it reads VGSIVGGIYLGFCFNAGAPAVEAFI. The Cytoplasmic segment spans residues 130 to 140; it reads EKVSRRSNFEF. A helical membrane pass occupies residues 141–163; the sequence is GRARMFGCVGWALCASIVGIMFT. Residues 164-166 lie on the Periplasmic side of the membrane; that stretch reads INN. A helical transmembrane segment spans residues 167–186; the sequence is QFVFWLGSGCALILAVLLFF. Residues 187-220 are Cytoplasmic-facing; that stretch reads AKTDAPSSATVANAVGANHSAFSLKLALELFRQP. A helical membrane pass occupies residues 221–249; it reads KLWFLSLYVIGVSCTYDVFDQQFANFFTS. Over 250 to 253 the chain is Periplasmic; that stretch reads FFAT. Residues 254 to 278 traverse the membrane as a helical segment; sequence GEQGTRVFGYVTTMGELLNASIMFF. Residues 279–288 lie on the Cytoplasmic side of the membrane; the sequence is APLIINRIGG. The helical transmembrane segment at 289–308 threads the bilayer; it reads KNALLLAGTIMSVRIIGSSF. Topologically, residues 309–311 are periplasmic; the sequence is ATS. The helical transmembrane segment at 312–334 threads the bilayer; it reads ALEVVILKTLHMFEVPFLLVGCF. Topologically, residues 335–346 are cytoplasmic; it reads KYITSQFEVRFS. A helical membrane pass occupies residues 347 to 374; the sequence is ATIYLVCFCFFKQLAMIFMSVLAGNMYE. Topologically, residues 375–377 are periplasmic; it reads SIG. Residues 378–398 form a helical membrane-spanning segment; sequence FQGAYLVLGLVALGFTLISVF. The Cytoplasmic segment spans residues 399-417; it reads TLSGPGPLSLLRRQVNEVA.

As to quaternary structure, monomer.

The protein localises to the cell inner membrane. The enzyme catalyses lactose(in) + H(+)(in) = lactose(out) + H(+)(out). It catalyses the reaction melibiose(in) + H(+)(in) = melibiose(out) + H(+)(out). With respect to regulation, inhibited by the proton ionophore carbonyl cyanide m-chlorophenylhydrazone (CCCP). Responsible for transport of beta-galactosides into the cell, with the concomitant import of a proton (symport system). Can transport lactose, melibiose, the synthetic disaccharide lactulose or the analog methyl-1-thio-beta,D-galactopyranoside (TMG), but not sucrose or fructose. The substrate specificity is directed toward the galactopyranosyl moiety of the substrate. In Escherichia coli (strain K12), this protein is Lactose permease.